We begin with the raw amino-acid sequence, 193 residues long: ATP-dependent Clp protease proteolytic subunit 2 (193 aa).

The Nucleophile role is filled by Ser-98. His-123 is a catalytic residue.

Belongs to the peptidase S14 family. In terms of assembly, fourteen ClpP subunits assemble into 2 heptameric rings which stack back to back to give a disk-like structure with a central cavity, resembling the structure of eukaryotic proteasomes.

It localises to the cytoplasm. It carries out the reaction Hydrolysis of proteins to small peptides in the presence of ATP and magnesium. alpha-casein is the usual test substrate. In the absence of ATP, only oligopeptides shorter than five residues are hydrolyzed (such as succinyl-Leu-Tyr-|-NHMec, and Leu-Tyr-Leu-|-Tyr-Trp, in which cleavage of the -Tyr-|-Leu- and -Tyr-|-Trp bonds also occurs).. Cleaves peptides in various proteins in a process that requires ATP hydrolysis. Has a chymotrypsin-like activity. Plays a major role in the degradation of misfolded proteins. This is ATP-dependent Clp protease proteolytic subunit 2 from Bacillus cereus (strain ATCC 10987 / NRS 248).